The following is a 164-amino-acid chain: Cyclin-dependent kinase inhibitor 1 (164 aa).

The residue at position 2 (Ser2) is an N-acetylserine. Ser2 is covalently cross-linked (Glycyl serine ester (Ser-Gly) (interchain with G-Cter in ubiquitin)). The segment at 13–41 adopts a C4-type zinc-finger fold; sequence CGSKACRRLFGPVDSEQLSRDCDALMAGC. The tract at residues 17–24 is required for binding cyclins; sequence ACRRLFGP. Positions 53-58 are required for binding CDKs; it reads FVTETP. The tract at residues 76–164 is disordered; that stretch reads LYLPTGPRRG…RRLIFSKRKP (89 aa). Phosphothreonine; by LKB1 is present on Thr80. Residue Ser114 is modified to Phosphoserine; by GSK3-beta. Ser130 bears the Phosphoserine mark. Residues 140–164 carry the PIP-box K+4 motif motif; it reads RKRRQTSMTDFYHSKRRLIFSKRKP. The Nuclear localization signal motif lies at 141-156; that stretch reads KRRQTSMTDFYHSKRR. Position 145 is a phosphothreonine; by PKA, PKB/AKT1, PIM1 and PIM2 (Thr145). The residue at position 146 (Ser146) is a Phosphoserine; by PKC and NUAK1. Residues 152-164 form an interaction with TRIM39 region; it reads HSKRRLIFSKRKP. Basic residues predominate over residues 153–164; it reads SKRRLIFSKRKP. Position 160 is a phosphoserine; by PKC; in vitro (Ser160).

The protein belongs to the CDI family. Interacts with HDAC1; the interaction is prevented by competitive binding of C10orf90/FATS to HDAC1 facilitating acetylation and protein stabilization of CDKN1A/p21. Interacts with MKRN1. Interacts with PSMA3. Interacts with PCNA. Component of the ternary complex, cyclin D-CDK4-CDKN1A. Interacts (via its N-terminal domain) with CDK4; the interaction promotes the assembly of the cyclin D-CDK4 complex, its nuclear translocation and promotes the cyclin D-dependent enzyme activity of CDK4. Binding to CDK2 leads to CDK2/cyclin E inactivation at the G1-S phase DNA damage checkpoint, thereby arresting cells at the G1-S transition during DNA repair. Interacts with PIM1. Interacts with STK11 and NUAK1. Interacts wih DTL. Interacts with isoform 1 and isoform 2 of TRIM39. Interacts with PKP3; the interaction sequesters CDKN1A to the cytoplasm thereby repressing its role as an inhibitor of CDK4- and CDK6-driven RB1 phosphorylation. In terms of processing, phosphorylation of Thr-145 by Akt or of Ser-146 by PKC impairs binding to PCNA. Phosphorylation at Ser-114 by GSK3-beta enhances ubiquitination by the DCX(DTL) complex. Phosphorylation of Thr-145 by PIM2 enhances CDKN1A stability and inhibits cell proliferation. Phosphorylation of Thr-145 by PIM1 results in the relocation of CDKN1A to the cytoplasm and enhanced CDKN1A protein stability. UV radiation-induced phosphorylation at Thr-80 by LKB1 and at Ser-146 by NUAK1 leads to its degradation. Post-translationally, ubiquitinated by MKRN1; leading to polyubiquitination and 26S proteasome-dependent degradation. Ubiquitinated by the DCX(DTL) complex, also named CRL4(CDT2) complex, leading to its degradation during S phase or following UV irradiation. Ubiquitination by the DCX(DTL) complex is essential to control replication licensing and is PCNA-dependent: interacts with PCNA via its PIP-box, while the presence of the containing the 'K+4' motif in the PIP box, recruit the DCX(DTL) complex, leading to its degradation. Ubiquitination at Ser-2 leads to degradation by the proteasome pathway. Ubiquitinated by RNF114; leading to proteasomal degradation. Acetylation leads to protein stability. Acetylated in vitro on Lys-141, Lys-154, Lys-161 and Lys-163. Deacetylation by HDAC1 is prevented by competitive binding of C10orf90/FATS to HDAC1. Expressed in all adult tissues, with 5-fold lower levels observed in the brain.

It localises to the cytoplasm. It is found in the nucleus. Plays an important role in controlling cell cycle progression and DNA damage-induced G2 arrest. Involved in p53/TP53 mediated inhibition of cellular proliferation in response to DNA damage. Also involved in p53-independent DNA damage-induced G2 arrest mediated by CREB3L1 in astrocytes and osteoblasts. Binds to and inhibits cyclin-dependent kinase activity, preventing phosphorylation of critical cyclin-dependent kinase substrates and blocking cell cycle progression. Functions in the nuclear localization and assembly of cyclin D-CDK4 complex and promotes its kinase activity towards RB1. At higher stoichiometric ratios, inhibits the kinase activity of the cyclin D-CDK4 complex. Inhibits DNA synthesis by DNA polymerase delta by competing with POLD3 for PCNA binding. Negatively regulates the CDK4- and CDK6-driven phosphorylation of RB1 in keratinocytes, thereby resulting in the release of E2F1 and subsequent transcription of E2F1-driven G1/S phase promoting genes. The polypeptide is Cyclin-dependent kinase inhibitor 1 (Homo sapiens (Human)).